The sequence spans 347 residues: Ketol-acid reductoisomerase (NADP(+)) (347 aa).

The KARI N-terminal Rossmann domain occupies 1-185 (MKIYYDEDAN…GGTRAGVLET (185 aa)). Residues 24–27 (YGSQ), Arg-47, Ser-50, Ser-52, and 82–85 (DEFQ) each bind NADP(+). The active site involves His-107. Residue Gly-133 coordinates NADP(+). The KARI C-terminal knotted domain occupies 186-336 (SFKEETETDL…AELRSKMKFL (151 aa)). Positions 194, 198, 230, and 234 each coordinate Mg(2+). Residue Ser-255 coordinates substrate.

The protein belongs to the ketol-acid reductoisomerase family. Requires Mg(2+) as cofactor.

The enzyme catalyses (2R)-2,3-dihydroxy-3-methylbutanoate + NADP(+) = (2S)-2-acetolactate + NADPH + H(+). The catalysed reaction is (2R,3R)-2,3-dihydroxy-3-methylpentanoate + NADP(+) = (S)-2-ethyl-2-hydroxy-3-oxobutanoate + NADPH + H(+). It participates in amino-acid biosynthesis; L-isoleucine biosynthesis; L-isoleucine from 2-oxobutanoate: step 2/4. It functions in the pathway amino-acid biosynthesis; L-valine biosynthesis; L-valine from pyruvate: step 2/4. Its function is as follows. Involved in the biosynthesis of branched-chain amino acids (BCAA). Catalyzes an alkyl-migration followed by a ketol-acid reduction of (S)-2-acetolactate (S2AL) to yield (R)-2,3-dihydroxy-isovalerate. In the isomerase reaction, S2AL is rearranged via a Mg-dependent methyl migration to produce 3-hydroxy-3-methyl-2-ketobutyrate (HMKB). In the reductase reaction, this 2-ketoacid undergoes a metal-dependent reduction by NADPH to yield (R)-2,3-dihydroxy-isovalerate. This chain is Ketol-acid reductoisomerase (NADP(+)), found in Gamma-proteobacterium EBAC31A08.